We begin with the raw amino-acid sequence, 267 residues long: Ribonuclease HII (267 aa).

The 189-residue stretch at 57–245 (WPVAGCDEVG…VVAARERHRA (189 aa)) folds into the RNase H type-2 domain. A divalent metal cation is bound by residues Asp-63, Glu-64, and Asp-154.

The protein belongs to the RNase HII family. Mn(2+) is required as a cofactor. It depends on Mg(2+) as a cofactor.

It is found in the cytoplasm. It carries out the reaction Endonucleolytic cleavage to 5'-phosphomonoester.. Functionally, endonuclease that specifically degrades the RNA of RNA-DNA hybrids. This chain is Ribonuclease HII, found in Nitrobacter hamburgensis (strain DSM 10229 / NCIMB 13809 / X14).